Reading from the N-terminus, the 197-residue chain is Small ribosomal subunit protein eS1 (197 aa).

This sequence belongs to the eukaryotic ribosomal protein eS1 family.

In Methanoculleus marisnigri (strain ATCC 35101 / DSM 1498 / JR1), this protein is Small ribosomal subunit protein eS1.